The primary structure comprises 419 residues: Multifunctional CCA protein (419 aa).

ATP contacts are provided by glycine 8 and arginine 11. Glycine 8 and arginine 11 together coordinate CTP. Aspartate 21 and aspartate 23 together coordinate Mg(2+). Arginine 91, arginine 137, and arginine 140 together coordinate ATP. The CTP site is built by arginine 91, arginine 137, and arginine 140. One can recognise an HD domain in the interval 226-327 (TGVHLMMVLD…VRLFDRCDAW (102 aa)).

This sequence belongs to the tRNA nucleotidyltransferase/poly(A) polymerase family. Bacterial CCA-adding enzyme type 1 subfamily. As to quaternary structure, monomer. Can also form homodimers and oligomers. It depends on Mg(2+) as a cofactor. Ni(2+) serves as cofactor.

The enzyme catalyses a tRNA precursor + 2 CTP + ATP = a tRNA with a 3' CCA end + 3 diphosphate. The catalysed reaction is a tRNA with a 3' CCA end + 2 CTP + ATP = a tRNA with a 3' CCACCA end + 3 diphosphate. Functionally, catalyzes the addition and repair of the essential 3'-terminal CCA sequence in tRNAs without using a nucleic acid template. Adds these three nucleotides in the order of C, C, and A to the tRNA nucleotide-73, using CTP and ATP as substrates and producing inorganic pyrophosphate. tRNA 3'-terminal CCA addition is required both for tRNA processing and repair. Also involved in tRNA surveillance by mediating tandem CCA addition to generate a CCACCA at the 3' terminus of unstable tRNAs. While stable tRNAs receive only 3'-terminal CCA, unstable tRNAs are marked with CCACCA and rapidly degraded. This Leptothrix cholodnii (strain ATCC 51168 / LMG 8142 / SP-6) (Leptothrix discophora (strain SP-6)) protein is Multifunctional CCA protein.